A 437-amino-acid polypeptide reads, in one-letter code: Epsilon-sarcoglycan (437 aa).

The Extracellular segment spans residues 1 to 317 (MQLPWWWELG…LKSRDYYTDF (317 aa)). N-linked (GlcNAc...) asparagine glycosylation is present at asparagine 200. The helical transmembrane segment at 318-338 (LVTLAVPSAVALVLFLILAYI) threads the bilayer. Residues 339–437 (MCCRREGVEK…QQQTTGKWYS (99 aa)) lie on the Cytoplasmic side of the membrane. Positions 418 to 437 (QNLPHQTQIPQQQTTGKWYS) are disordered.

Belongs to the sarcoglycan alpha/epsilon family. Post-translationally, N-glycosylated. Ubiquitinated, leading to its degradation by the proteasome.

The protein localises to the cell membrane. Its subcellular location is the sarcolemma. The protein resides in the cytoplasm. It localises to the cytoskeleton. It is found in the cell projection. The protein localises to the dendrite. Its subcellular location is the golgi apparatus. Its function is as follows. Component of the sarcoglycan complex, a subcomplex of the dystrophin-glycoprotein complex which forms a link between the F-actin cytoskeleton and the extracellular matrix. This Bos taurus (Bovine) protein is Epsilon-sarcoglycan (SGCE).